The following is a 149-amino-acid chain: Large ribosomal subunit protein bL20m (149 aa).

The transit peptide at 1-9 (MVFLTAQLW) directs the protein to the mitochondrion.

It belongs to the bacterial ribosomal protein bL20 family. In terms of assembly, component of the mitochondrial large ribosomal subunit (mt-LSU). Mature mammalian 55S mitochondrial ribosomes consist of a small (28S) and a large (39S) subunit. The 28S small subunit contains a 12S ribosomal RNA (12S mt-rRNA) and 30 different proteins. The 39S large subunit contains a 16S rRNA (16S mt-rRNA), a copy of mitochondrial valine transfer RNA (mt-tRNA(Val)), which plays an integral structural role, and 52 different proteins. Interacts with OXA1L.

Its subcellular location is the mitochondrion. The polypeptide is Large ribosomal subunit protein bL20m (MRPL20) (Homo sapiens (Human)).